A 111-amino-acid polypeptide reads, in one-letter code: Cytochrome b-c1 complex subunit 7 (111 aa).

The residue at position 2 (Ala2) is an N-acetylalanine. Lys19 carries the post-translational modification N6-acetyllysine. Lys78 carries the N6-acetyllysine; alternate modification. N6-succinyllysine; alternate is present on Lys78. Lys83 carries the post-translational modification N6-acetyllysine. Position 88 is an N6-acetyllysine; alternate (Lys88). Lys88 is modified (N6-succinyllysine; alternate). Residue Lys96 is modified to N6-acetyllysine.

This sequence belongs to the UQCRB/QCR7 family. In terms of assembly, component of the ubiquinol-cytochrome c oxidoreductase (cytochrome b-c1 complex, complex III, CIII), a multisubunit enzyme composed of 11 subunits. The complex is composed of 3 respiratory subunits cytochrome b, cytochrome c1 and Rieske protein UQCRFS1, 2 core protein subunits UQCRC1/QCR1 and UQCRC2/QCR2, and 6 low-molecular weight protein subunits UQCRH/QCR6, UQCRB/QCR7, UQCRQ/QCR8, UQCR10/QCR9, UQCR11/QCR10 and subunit 9, the cleavage product of Rieske protein UQCRFS1. The complex exists as an obligatory dimer and forms supercomplexes (SCs) in the inner mitochondrial membrane with NADH-ubiquinone oxidoreductase (complex I, CI) and cytochrome c oxidase (complex IV, CIV), resulting in different assemblies (supercomplex SCI(1)III(2)IV(1) and megacomplex MCI(2)III(2)IV(2)).

Its subcellular location is the mitochondrion inner membrane. In terms of biological role, component of the ubiquinol-cytochrome c oxidoreductase, a multisubunit transmembrane complex that is part of the mitochondrial electron transport chain which drives oxidative phosphorylation. The respiratory chain contains 3 multisubunit complexes succinate dehydrogenase (complex II, CII), ubiquinol-cytochrome c oxidoreductase (cytochrome b-c1 complex, complex III, CIII) and cytochrome c oxidase (complex IV, CIV), that cooperate to transfer electrons derived from NADH and succinate to molecular oxygen, creating an electrochemical gradient over the inner membrane that drives transmembrane transport and the ATP synthase. The cytochrome b-c1 complex catalyzes electron transfer from ubiquinol to cytochrome c, linking this redox reaction to translocation of protons across the mitochondrial inner membrane, with protons being carried across the membrane as hydrogens on the quinol. In the process called Q cycle, 2 protons are consumed from the matrix, 4 protons are released into the intermembrane space and 2 electrons are passed to cytochrome c. This Bos taurus (Bovine) protein is Cytochrome b-c1 complex subunit 7 (UQCRB).